Reading from the N-terminus, the 163-residue chain is Bursicon (163 aa).

The first 23 residues, 1-23 (MKSTFLVVLELAFFLLPGRVLYA), serve as a signal peptide directing secretion. Intrachain disulfides connect C39–C88, C53–C102, C63–C123, C67–C125, and C85–C128. The region spanning 39–129 (CQVTPVIHVL…PLECMCRPCT (91 aa)) is the CTCK domain.

Heterodimer of burs and pburs.

It is found in the secreted. Functionally, final heterodimeric neurohormone released at the end of the molting cycle, involved in the sclerotization (tanning) of the insect cuticle, melanization and wing spreading. The sequence is that of Bursicon (burs124) from Anopheles gambiae (African malaria mosquito).